We begin with the raw amino-acid sequence, 506 residues long: Protein P7 (506 aa).

RNA-binding stretches follow at residues 128–249 (ISYL…GKRE) and 325–355 (DGSYGNRVIISHKMSRLSNGGVKIIGRFKIS).

Belongs to the phytoreovirus protein P7 family.

The protein resides in the virion. The protein localises to the host cytoplasm. Functionally, probable component of the transcriptional machinery present in the inner capsid. Displays dsRNA binding activity and may play an important role in the sorting of viral RNA and virion assembly. Together with the RNA-directed RNA polymerase P1 and capping enzyme P5, forms an transcriptional complex positioned near the channels situated at each of the five-fold vertices of the core. In Alopecurus aequalis (Barnyard grass), this protein is Protein P7.